A 273-amino-acid chain; its full sequence is Pantothenate synthetase (273 aa).

Met27–His34 lines the ATP pocket. Catalysis depends on His34, which acts as the Proton donor. (R)-pantoate is bound at residue Gln58. Gln58 is a binding site for beta-alanine. Gly144–Asp147 is an ATP binding site. A (R)-pantoate-binding site is contributed by Gln150. Residues Val173 and Leu181–Arg184 contribute to the ATP site.

This sequence belongs to the pantothenate synthetase family. As to quaternary structure, homodimer.

The protein resides in the cytoplasm. It carries out the reaction (R)-pantoate + beta-alanine + ATP = (R)-pantothenate + AMP + diphosphate + H(+). Its pathway is cofactor biosynthesis; (R)-pantothenate biosynthesis; (R)-pantothenate from (R)-pantoate and beta-alanine: step 1/1. Its function is as follows. Catalyzes the condensation of pantoate with beta-alanine in an ATP-dependent reaction via a pantoyl-adenylate intermediate. The chain is Pantothenate synthetase from Nitratiruptor sp. (strain SB155-2).